The sequence spans 237 residues: Prospore formation at selected spindle poles protein 1 (237 aa).

Its subcellular location is the nucleus. The protein localises to the cytoplasm. It is found in the cytoskeleton. It localises to the microtubule organizing center. The protein resides in the spindle pole body. Functionally, involved in the pathway that organizes the shaping and sizing of the prospore membrane (PSM) during sporulation. Required to localize MPC54 to all four spindle pole bodies, and localize DON1 and SPO14 to four prospore membranes. The chain is Prospore formation at selected spindle poles protein 1 (PFS1) from Saccharomyces cerevisiae (strain ATCC 204508 / S288c) (Baker's yeast).